Here is a 208-residue protein sequence, read N- to C-terminus: MNVNVINHPLVRHKLTLMREADCSTYKFRTLAIELARLMAYEASRDFEIEKYLIDGWCGQIEGDRIKGKTLTVVPILRAGLGMLDGVLDLIPTAKISVVGLQRDEETLKPVSYFEKFVDSMDERPALIIDPMLATGGSMVATIDLLKAKGCKNIKALVLVAAPEGVKAVNDAHPDVTIYTAALDSHLNENGYIIPGLGDAGDKIFGTR.

5-phospho-alpha-D-ribose 1-diphosphate-binding positions include arginine 78, arginine 103, and 130 to 138 (DPMLATGGS). Uracil contacts are provided by residues isoleucine 193 and 198–200 (GDA). Position 199 (aspartate 199) interacts with 5-phospho-alpha-D-ribose 1-diphosphate.

This sequence belongs to the UPRTase family. The cofactor is Mg(2+).

The catalysed reaction is UMP + diphosphate = 5-phospho-alpha-D-ribose 1-diphosphate + uracil. It participates in pyrimidine metabolism; UMP biosynthesis via salvage pathway; UMP from uracil: step 1/1. Its activity is regulated as follows. Allosterically activated by GTP. Functionally, catalyzes the conversion of uracil and 5-phospho-alpha-D-ribose 1-diphosphate (PRPP) to UMP and diphosphate. This Neisseria meningitidis serogroup C (strain 053442) protein is Uracil phosphoribosyltransferase.